A 377-amino-acid polypeptide reads, in one-letter code: Guanine nucleotide-binding protein subunit beta-2 (377 aa).

WD repeat units lie at residues 63–93 (GHTG…IVWN), 105–135 (LPCA…SIFN), 154–185 (GHKG…VLWD), 202–233 (GHTA…RLWD), 246–276 (GHEG…RLFD), 293–323 (GDIP…YVWD), and 339–369 (SHEG…KIWA).

Belongs to the WD repeat G protein beta family. As to quaternary structure, g proteins are composed of 3 units, alpha, beta and gamma.

Guanine nucleotide-binding proteins (G proteins) are involved as a modulator or transducer in various transmembrane signaling systems. The beta and gamma chains are required for the GTPase activity, for replacement of GDP by GTP, and for G protein-effector interaction. This is Guanine nucleotide-binding protein subunit beta-2 from Nicotiana tabacum (Common tobacco).